A 162-amino-acid polypeptide reads, in one-letter code: Iron-sulfur cluster assembly protein IscU (162 aa).

Belongs to the NifU family. In terms of assembly, homotrimer. Small proportion is monomeric. Interacts with IscS. Interacts with ABCB6. Component of a complex, at least composed of IscS, Isd11 and IscU. The cofactor is [4Fe-4S] cluster.

The protein resides in the mitochondrion. Its pathway is cofactor biosynthesis; iron-sulfur cluster biosynthesis. Functionally, participates in iron-sulfur cluster formation (ISC) pathway for iron-sulfur (Fe-S) cluster biogenesis. Plays a role of a major scaffold protein for [Fe-S] assembly; assembles [4Fe-4S] clusters directly upon interaction with the catalytic component IscS-Isd11 as part of the scaffold complex. Can transfer [4Fe-4S] clusters to target apo-proteins. This chain is Iron-sulfur cluster assembly protein IscU, found in Plasmodium falciparum (isolate 3D7).